Here is a 338-residue protein sequence, read N- to C-terminus: Ribosomal RNA small subunit methyltransferase C (338 aa).

Belongs to the methyltransferase superfamily. RsmC family. Monomer.

The protein localises to the cytoplasm. The catalysed reaction is guanosine(1207) in 16S rRNA + S-adenosyl-L-methionine = N(2)-methylguanosine(1207) in 16S rRNA + S-adenosyl-L-homocysteine + H(+). In terms of biological role, specifically methylates the guanine in position 1207 of 16S rRNA in the 30S particle. In Photorhabdus laumondii subsp. laumondii (strain DSM 15139 / CIP 105565 / TT01) (Photorhabdus luminescens subsp. laumondii), this protein is Ribosomal RNA small subunit methyltransferase C.